Here is a 46-residue protein sequence, read N- to C-terminus: Protein krueppel (46 aa).

C2H2-type zinc fingers lie at residues Met-1–His-4, Tyr-10–His-32, and Tyr-38–Lys-46.

The protein belongs to the krueppel C2H2-type zinc-finger protein family.

It localises to the nucleus. Its function is as follows. Krueppel is a gap class segmentation protein. This chain is Protein krueppel (Kr), found in Lithobius forficatus (Centipede).